The following is a 290-amino-acid chain: UPF0761 membrane protein CKO_03126 (290 aa).

The next 6 helical transmembrane spans lie at 44 to 64, 104 to 124, 140 to 160, 183 to 203, 210 to 230, and 244 to 264; these read LLSL…FPMF, VGAC…DSAL, FAVY…SLAI, VFPL…VPTT, AVVG…GFAL, and VLAV…IVLL.

It belongs to the UPF0761 family.

The protein localises to the cell inner membrane. This chain is UPF0761 membrane protein CKO_03126, found in Citrobacter koseri (strain ATCC BAA-895 / CDC 4225-83 / SGSC4696).